Reading from the N-terminus, the 212-residue chain is HTH-type transcriptional regulatory protein RaaS (212 aa).

In terms of domain architecture, HTH tetR-type spans Leu-6 to Ile-65. A DNA-binding region (H-T-H motif) is located at residues Gly-28 to Phe-47.

In terms of assembly, homodimer. Interacts with long chain acyl-CoA derivatives. Interacts with several drugs such rhodamine 6G, ethidium and safranin O.

Its activity is regulated as follows. Interaction with long chain acyl-CoA derivatives (oleoyl-CoA and, to lesser extent, stearoyl-CoA) prevents binding to DNA, leading to the expression of the target genes. Long chain acyl-CoA derivatives may serve as biological indicators of the bacterial metabolic state. In terms of biological role, regulates the expression of the Rv1217c-Rv1218c multidrug efflux system and its own expression. Acts by binding to promoter regions of Rv1219c and upstream of the Rv1218c gene. Important for survival in prolonged stationary phase and during macrophage infection. May be used to eliminate non-growing mycobacteria. This is HTH-type transcriptional regulatory protein RaaS from Mycobacterium tuberculosis (strain ATCC 25618 / H37Rv).